The sequence spans 121 residues: Large ribosomal subunit protein uL18 (121 aa).

It belongs to the universal ribosomal protein uL18 family. In terms of assembly, part of the 50S ribosomal subunit; part of the 5S rRNA/L5/L18/L25 subcomplex. Contacts the 5S and 23S rRNAs.

Functionally, this is one of the proteins that bind and probably mediate the attachment of the 5S RNA into the large ribosomal subunit, where it forms part of the central protuberance. In Mesomycoplasma hyopneumoniae (strain J / ATCC 25934 / NCTC 10110) (Mycoplasma hyopneumoniae), this protein is Large ribosomal subunit protein uL18.